A 510-amino-acid polypeptide reads, in one-letter code: Polyamine aminopropyltransferase 2 (510 aa).

6 helical membrane-spanning segments follow: residues 6–26 (ALLVLAVFVVASCGLAYELIA), 38–58 (ILQFSSIIGAYLFAMGIGSWV), 74–94 (LELLVGLFGGVSAAALFLLFA), 102–122 (LVLYALVTVIGVLVGMEIPLV), 140–160 (VLTFDYLGALAVSLLFPLVLA), and 165–185 (LVRTGFLFGLCNTAIAVWTLW). In terms of domain architecture, PABS spans 205 to 449 (AGMVGAALLA…GEWGFILAAP (245 aa)). The spermidine synthase stretch occupies residues 207–456 (MVGAALLAGF…AAPGRADFRP (250 aa)). Q244 lines the S-methyl-5'-thioadenosine pocket. Spermidine is bound by residues H274 and D298. S-methyl-5'-thioadenosine contacts are provided by residues D318 and 352–353 (DA). The active-site Proton acceptor is D370.

Belongs to the spermidine/spermine synthase family. As to quaternary structure, homodimer or homotetramer.

The protein localises to the cell membrane. The catalysed reaction is S-adenosyl 3-(methylsulfanyl)propylamine + putrescine = S-methyl-5'-thioadenosine + spermidine + H(+). Its pathway is amine and polyamine biosynthesis; spermidine biosynthesis; spermidine from putrescine: step 1/1. In terms of biological role, catalyzes the irreversible transfer of a propylamine group from the amino donor S-adenosylmethioninamine (decarboxy-AdoMet) to putrescine (1,4-diaminobutane) to yield spermidine. In Ralstonia nicotianae (strain ATCC BAA-1114 / GMI1000) (Ralstonia solanacearum), this protein is Polyamine aminopropyltransferase 2.